Consider the following 205-residue polypeptide: Keratin-associated protein 4-6 (205 aa).

30 tandem repeats follow at residues 20–24, 25–29, 30–34, 35–39, 40–44, 45–49, 50–54, 55–59, 60–64, 65–68, 69–73, 74–78, 79–83, 84–88, 89–93, 94–98, 99–103, 104–108, 114–118, 119–123, 124–128, 129–133, 134–138, 139–143, 144–148, 149–153, 154–158, 159–163, 164–168, and 169–173. Residues 20–173 are 30 X 5 AA repeats of C-C-[IRQVEL]-[SPTR]-[STVQRCP]; that stretch reads CCRPSCCQTT…CCRPCCCLRP (154 aa).

It belongs to the KRTAP type 4 family. Interacts with hair keratins. In terms of tissue distribution, expressed in the hair follicles.

In the hair cortex, hair keratin intermediate filaments are embedded in an interfilamentous matrix, consisting of hair keratin-associated proteins (KRTAP), which are essential for the formation of a rigid and resistant hair shaft through their extensive disulfide bond cross-linking with abundant cysteine residues of hair keratins. The matrix proteins include the high-sulfur and high-glycine-tyrosine keratins. This chain is Keratin-associated protein 4-6 (KRTAP4-6), found in Homo sapiens (Human).